Consider the following 734-residue polypeptide: Elongation factor 2 (734 aa).

In terms of domain architecture, tr-type G spans 18–259 (EQIRNIGITA…MVVKYVPNPR (242 aa)). GTP is bound by residues 27–34 (AHVDHGKT), 93–97 (DTPGH), and 147–150 (NKID). The residue at position 600 (H600) is a Diphthamide.

It belongs to the TRAFAC class translation factor GTPase superfamily. Classic translation factor GTPase family. EF-G/EF-2 subfamily.

The protein localises to the cytoplasm. Functionally, catalyzes the GTP-dependent ribosomal translocation step during translation elongation. During this step, the ribosome changes from the pre-translocational (PRE) to the post-translocational (POST) state as the newly formed A-site-bound peptidyl-tRNA and P-site-bound deacylated tRNA move to the P and E sites, respectively. Catalyzes the coordinated movement of the two tRNA molecules, the mRNA and conformational changes in the ribosome. In Desulfurococcus mucosus (Desulfurococcus mobilis), this protein is Elongation factor 2 (fusA).